Here is a 145-residue protein sequence, read N- to C-terminus: MRAVVQRVTRAKCTVDGAVTGETGPGLLVLLGVAPQDSADTARTLAAKLAKLRIFNDDAGKMNRSVQDIGGGVLSISQFTLFADTSRGNRPSFTGAASPKQGRELYAEFNAALRALGLPVGEGVFGAHMDIELVNDGPVTVTLDI.

The short motif at 137–138 is the Gly-cisPro motif, important for rejection of L-amino acids element; it reads GP.

Belongs to the DTD family. As to quaternary structure, homodimer.

It localises to the cytoplasm. The enzyme catalyses glycyl-tRNA(Ala) + H2O = tRNA(Ala) + glycine + H(+). It carries out the reaction a D-aminoacyl-tRNA + H2O = a tRNA + a D-alpha-amino acid + H(+). An aminoacyl-tRNA editing enzyme that deacylates mischarged D-aminoacyl-tRNAs. Also deacylates mischarged glycyl-tRNA(Ala), protecting cells against glycine mischarging by AlaRS. Acts via tRNA-based rather than protein-based catalysis; rejects L-amino acids rather than detecting D-amino acids in the active site. By recycling D-aminoacyl-tRNA to D-amino acids and free tRNA molecules, this enzyme counteracts the toxicity associated with the formation of D-aminoacyl-tRNA entities in vivo and helps enforce protein L-homochirality. The protein is D-aminoacyl-tRNA deacylase of Deinococcus radiodurans (strain ATCC 13939 / DSM 20539 / JCM 16871 / CCUG 27074 / LMG 4051 / NBRC 15346 / NCIMB 9279 / VKM B-1422 / R1).